The sequence spans 906 residues: Kinesin-like protein KIN-7G (906 aa).

Positions 26-344 (SVAVAVRFRP…LKFAHRAKHI (319 aa)) constitute a Kinesin motor domain. 105–112 (GVTSSGKT) is an ATP binding site. Coiled coils occupy residues 346 to 385 (IQAT…RTGT), 733 to 814 (SDEF…GRNQ), and 839 to 875 (GDMN…LEKE). Residues 803-840 (RLSSELASGRNQRRGSHGPRGARRESHTKRYEPARRGD) form a disordered region. Positions 813-823 (NQRRGSHGPRG) are enriched in basic residues. Over residues 824 to 840 (ARRESHTKRYEPARRGD) the composition is skewed to basic and acidic residues.

This sequence belongs to the TRAFAC class myosin-kinesin ATPase superfamily. Kinesin family. KIN-7 subfamily.

The protein is Kinesin-like protein KIN-7G of Oryza sativa subsp. japonica (Rice).